Consider the following 161-residue polypeptide: AP-1 complex subunit sigma-1 (161 aa).

This sequence belongs to the adaptor complexes small subunit family. As to quaternary structure, adaptor protein complex 1 (AP-1) is a heterotetramer composed of two large adaptins (gamma-type subunit and beta-type subunit), a medium adaptin (mu-type subunit) and a small adaptin (sigma-type subunit). In terms of tissue distribution, expressed in seedlings, roots, stems, leaves, flowers and siliques (developing fruits and seeds).

The protein localises to the golgi apparatus. The protein resides in the cytoplasmic vesicle. It localises to the clathrin-coated vesicle membrane. Subunit of clathrin-associated adaptor protein complex 1 that plays a role in protein sorting at the trans-Golgi network and early endosomes (TGN/EE). The AP complexes mediate the recruitment of clathrin to membranes and the recognition of sorting signals within the cytosolic tails of transmembrane cargo molecules. The polypeptide is AP-1 complex subunit sigma-1 (AAP19-1) (Arabidopsis thaliana (Mouse-ear cress)).